Consider the following 145-residue polypeptide: D-aminoacyl-tRNA deacylase (145 aa).

The short motif at 137–138 (GP) is the Gly-cisPro motif, important for rejection of L-amino acids element.

The protein belongs to the DTD family. Homodimer.

It is found in the cytoplasm. The catalysed reaction is glycyl-tRNA(Ala) + H2O = tRNA(Ala) + glycine + H(+). The enzyme catalyses a D-aminoacyl-tRNA + H2O = a tRNA + a D-alpha-amino acid + H(+). In terms of biological role, an aminoacyl-tRNA editing enzyme that deacylates mischarged D-aminoacyl-tRNAs. Also deacylates mischarged glycyl-tRNA(Ala), protecting cells against glycine mischarging by AlaRS. Acts via tRNA-based rather than protein-based catalysis; rejects L-amino acids rather than detecting D-amino acids in the active site. By recycling D-aminoacyl-tRNA to D-amino acids and free tRNA molecules, this enzyme counteracts the toxicity associated with the formation of D-aminoacyl-tRNA entities in vivo and helps enforce protein L-homochirality. The polypeptide is D-aminoacyl-tRNA deacylase (Saccharophagus degradans (strain 2-40 / ATCC 43961 / DSM 17024)).